Reading from the N-terminus, the 767-residue chain is DNA topoisomerase 1 (767 aa).

Positions M1–K23 are enriched in basic and acidic residues. The segment at M1–E200 is disordered. S2 is subject to N-acetylserine. S2 and S10 each carry phosphoserine. Residues H24–K39 show a composition bias toward basic residues. Basic and acidic residues predominate over residues K40–N110. S59 is subject to Phosphoserine. Residue K103 forms a Glycyl lysine isopeptide (Lys-Gly) (interchain with G-Cter in SUMO2) linkage. Residue K105 forms a Glycyl lysine isopeptide (Lys-Gly) (interchain with G-Cter in SUMO); alternate linkage. A Glycyl lysine isopeptide (Lys-Gly) (interchain with G-Cter in SUMO2); alternate cross-link involves residue K105. S114 is subject to Phosphoserine. A Glycyl lysine isopeptide (Lys-Gly) (interchain with G-Cter in SUMO); alternate cross-link involves residue K119. K119 participates in a covalent cross-link: Glycyl lysine isopeptide (Lys-Gly) (interchain with G-Cter in SUMO2); alternate. K119 participates in a covalent cross-link: Glycyl lysine isopeptide (Lys-Gly) (interchain with G-Cter in SUMO1); alternate. Residues P131 to E168 show a composition bias toward basic and acidic residues. Glycyl lysine isopeptide (Lys-Gly) (interchain with G-Cter in SUMO2) cross-links involve residues K136 and K150. K155 participates in a covalent cross-link: Glycyl lysine isopeptide (Lys-Gly) (interchain with G-Cter in SUMO); alternate. Residue K155 forms a Glycyl lysine isopeptide (Lys-Gly) (interchain with G-Cter in SUMO2); alternate linkage. Glycyl lysine isopeptide (Lys-Gly) (interchain with G-Cter in SUMO2) cross-links involve residues K160 and K166. K174 is covalently cross-linked (Glycyl lysine isopeptide (Lys-Gly) (interchain with G-Cter in SUMO2); alternate). N6-acetyllysine; alternate is present on K174. Positions K181–E200 are enriched in basic and acidic residues. K206 participates in a covalent cross-link: Glycyl lysine isopeptide (Lys-Gly) (interchain with G-Cter in SUMO2). Residue K282 is modified to N6-acetyllysine. Residue K338 forms a Glycyl lysine isopeptide (Lys-Gly) (interchain with G-Cter in SUMO2) linkage. Interaction with DNA regions lie at residues K427–Y428 and R490–K495. The Topo IB-type catalytic domain maps to S434–F767. S508 bears the Phosphoserine; by CK2 mark. A Glycyl lysine isopeptide (Lys-Gly) (interchain with G-Cter in SUMO2) cross-link involves residue K551. The interval T587–K589 is interaction with DNA. Glycyl lysine isopeptide (Lys-Gly) (interchain with G-Cter in SUMO2) cross-links involve residues K644, K702, and K714. The O-(3'-phospho-DNA)-tyrosine intermediate role is filled by Y725.

The protein belongs to the type IB topoisomerase family. In terms of assembly, monomer. Interacts with ERCC6. Interacts with TPRN; TPRN interacts with a number of DNA damage response proteins, is recruited to sites of DNA damage and may play a role in DNA damage repair. In terms of processing, sumoylated. Lys-119 is the main site of sumoylation. Sumoylation plays a role in partitioning TOP1 between nucleoli and nucleoplasm. Levels are dramatically increased on camptothecin (CPT) treatment. Post-translationally, phosphorylation at Ser-508 by CK2 increases binding to supercoiled DNA and sensitivity to camptothecin.

It is found in the nucleus. The protein resides in the nucleolus. The protein localises to the nucleoplasm. It carries out the reaction ATP-independent breakage of single-stranded DNA, followed by passage and rejoining.. In terms of biological role, releases the supercoiling and torsional tension of DNA introduced during the DNA replication and transcription by transiently cleaving and rejoining one strand of the DNA duplex. Introduces a single-strand break via transesterification at a target site in duplex DNA. The scissile phosphodiester is attacked by the catalytic tyrosine of the enzyme, resulting in the formation of a DNA-(3'-phosphotyrosyl)-enzyme intermediate and the expulsion of a 5'-OH DNA strand. The free DNA strand then rotates around the intact phosphodiester bond on the opposing strand, thus removing DNA supercoils. Finally, in the religation step, the DNA 5'-OH attacks the covalent intermediate to expel the active-site tyrosine and restore the DNA phosphodiester backbone. Regulates the alternative splicing of tissue factor (F3) pre-mRNA in endothelial cells. Involved in the circadian transcription of the core circadian clock component BMAL1 by altering the chromatin structure around the ROR response elements (ROREs) on the BMAL1 promoter. The sequence is that of DNA topoisomerase 1 (Top1) from Rattus norvegicus (Rat).